The following is a 95-amino-acid chain: Co-chaperonin GroES (95 aa).

Belongs to the GroES chaperonin family. As to quaternary structure, heptamer of 7 subunits arranged in a ring. Interacts with the chaperonin GroEL.

It localises to the cytoplasm. Its function is as follows. Together with the chaperonin GroEL, plays an essential role in assisting protein folding. The GroEL-GroES system forms a nano-cage that allows encapsulation of the non-native substrate proteins and provides a physical environment optimized to promote and accelerate protein folding. GroES binds to the apical surface of the GroEL ring, thereby capping the opening of the GroEL channel. This chain is Co-chaperonin GroES, found in Marinobacter nauticus (strain ATCC 700491 / DSM 11845 / VT8) (Marinobacter aquaeolei).